The following is a 457-amino-acid chain: Peptidyl-prolyl cis-trans isomerase FKBP5 (457 aa).

N-acetylmethionine is present on methionine 1. The tract at residues 1-26 is disordered; that stretch reads MTTDEGAKNNGESPTATVAEQGEDIT. Serine 13 carries the post-translational modification Phosphoserine. 2 PPIase FKBP-type domains span residues 50–138 and 165–251; these read GDKV…LDFK and GATV…KSFE. 3 TPR repeats span residues 268–301, 317–350, and 351–384; these read AAIV…LEME, LAAF…DSAN, and GKGL…NPQN. Residues 420-457 form a disordered region; the sequence is DAKEEANKAMGKKTSEGVTNEKGTDSQAMEEEKPEGHV. Serine 445 carries the post-translational modification Phosphoserine.

In terms of assembly, part of a heteromultimeric cytoplasmic complex with HSP90AA1, HSPA1A/HSPA1B and steroid receptors. Upon ligand binding dissociates from the complex and FKBP4 takes its place. Interacts with functionally mature heterooligomeric progesterone receptor complexes along with HSP90 and TEBP. Interacts with IFI44L; this interaction modulates the kinase activity of IKBKB and IKBKE. Interacts with IKBKB and IKBKE.

Its subcellular location is the cytoplasm. The protein resides in the nucleus. It catalyses the reaction [protein]-peptidylproline (omega=180) = [protein]-peptidylproline (omega=0). With respect to regulation, inhibited by FK506 but not cyclosporin. Its function is as follows. Immunophilin protein with PPIase and co-chaperone activities. Component of unligated steroid receptors heterocomplexes through interaction with heat-shock protein 90 (HSP90). Plays a role in the intracellular trafficking of heterooligomeric forms of steroid hormone receptors maintaining the complex into the cytoplasm when unliganded. Acts as a regulator of Akt/AKT1 activity by promoting the interaction between Akt/AKT1 and PHLPP1, thereby enhancing dephosphorylation and subsequent activation of Akt/AKT1. Interacts with IKBKE and IKBKB which facilitates IKK complex assembly leading to increased IKBKE and IKBKB kinase activity, NF-kappaB activation, and IFN production. This is Peptidyl-prolyl cis-trans isomerase FKBP5 (FKBP5) from Pongo abelii (Sumatran orangutan).